The sequence spans 305 residues: Glycine--tRNA ligase alpha subunit (305 aa).

This sequence belongs to the class-II aminoacyl-tRNA synthetase family. In terms of assembly, tetramer of two alpha and two beta subunits.

The protein localises to the cytoplasm. The enzyme catalyses tRNA(Gly) + glycine + ATP = glycyl-tRNA(Gly) + AMP + diphosphate. The polypeptide is Glycine--tRNA ligase alpha subunit (Heliobacterium modesticaldum (strain ATCC 51547 / Ice1)).